Reading from the N-terminus, the 664-residue chain is Threonine--tRNA ligase (664 aa).

One can recognise a TGS domain in the interval 1–64 (MSELLKITLP…TADAQLALVT (64 aa)). Residues 250–559 (DHRKLGNEMD…LIEHFAGRLP (310 aa)) are catalytic. Residues Cys355, His406, and His536 each coordinate Zn(2+).

This sequence belongs to the class-II aminoacyl-tRNA synthetase family. Homodimer. It depends on Zn(2+) as a cofactor.

The protein localises to the cytoplasm. It carries out the reaction tRNA(Thr) + L-threonine + ATP = L-threonyl-tRNA(Thr) + AMP + diphosphate + H(+). Functionally, catalyzes the attachment of threonine to tRNA(Thr) in a two-step reaction: L-threonine is first activated by ATP to form Thr-AMP and then transferred to the acceptor end of tRNA(Thr). Also edits incorrectly charged L-seryl-tRNA(Thr). This chain is Threonine--tRNA ligase, found in Novosphingobium aromaticivorans (strain ATCC 700278 / DSM 12444 / CCUG 56034 / CIP 105152 / NBRC 16084 / F199).